Consider the following 608-residue polypeptide: UvrABC system protein C (608 aa).

Residues 16-94 (NRPGVYRMFD…IKEWRPPYNI (79 aa)) form the GIY-YIG domain. The 36-residue stretch at 204-239 (NALADELNVGMEQAAMRLDFEKAAELRDQVAILRRV) folds into the UVR domain.

The protein belongs to the UvrC family. In terms of assembly, interacts with UvrB in an incision complex.

It localises to the cytoplasm. In terms of biological role, the UvrABC repair system catalyzes the recognition and processing of DNA lesions. UvrC both incises the 5' and 3' sides of the lesion. The N-terminal half is responsible for the 3' incision and the C-terminal half is responsible for the 5' incision. This chain is UvrABC system protein C, found in Pseudomonas aeruginosa (strain LESB58).